A 206-amino-acid polypeptide reads, in one-letter code: Large ribosomal subunit protein uL4 (206 aa).

The interval 63–93 is disordered; the sequence is MYKQKGTGRARHHSARAPQFRGGGKAHGPVV. The segment covering 64–77 has biased composition (basic residues); it reads YKQKGTGRARHHSA.

It belongs to the universal ribosomal protein uL4 family. As to quaternary structure, part of the 50S ribosomal subunit.

Functionally, one of the primary rRNA binding proteins, this protein initially binds near the 5'-end of the 23S rRNA. It is important during the early stages of 50S assembly. It makes multiple contacts with different domains of the 23S rRNA in the assembled 50S subunit and ribosome. Its function is as follows. Forms part of the polypeptide exit tunnel. The sequence is that of Large ribosomal subunit protein uL4 from Sinorhizobium fredii (strain NBRC 101917 / NGR234).